The following is a 315-amino-acid chain: tRNA-dihydrouridine(16) synthase (315 aa).

FMN contacts are provided by residues 7-9 (PME) and Q68. C98 functions as the Proton donor in the catalytic mechanism. Residues K139, 200–202 (NGE), and 224–225 (GR) each bind FMN.

Belongs to the Dus family. DusC subfamily. The cofactor is FMN.

It catalyses the reaction 5,6-dihydrouridine(16) in tRNA + NADP(+) = uridine(16) in tRNA + NADPH + H(+). It carries out the reaction 5,6-dihydrouridine(16) in tRNA + NAD(+) = uridine(16) in tRNA + NADH + H(+). Its function is as follows. Catalyzes the synthesis of 5,6-dihydrouridine (D), a modified base found in the D-loop of most tRNAs, via the reduction of the C5-C6 double bond in target uridines. Specifically modifies U16 in tRNAs. This Shigella flexneri protein is tRNA-dihydrouridine(16) synthase.